The chain runs to 561 residues: Urocanate hydratase (561 aa).

Residues 52-53 (GG), Gln-130, 176-178 (GMG), Glu-196, Arg-201, 242-243 (NA), 263-267 (QTSAH), 273-274 (YL), and Tyr-322 contribute to the NAD(+) site. Cys-410 is a catalytic residue. Gly-492 contributes to the NAD(+) binding site.

It belongs to the urocanase family. NAD(+) serves as cofactor.

It localises to the cytoplasm. The catalysed reaction is 4-imidazolone-5-propanoate = trans-urocanate + H2O. The protein operates within amino-acid degradation; L-histidine degradation into L-glutamate; N-formimidoyl-L-glutamate from L-histidine: step 2/3. Catalyzes the conversion of urocanate to 4-imidazolone-5-propionate. This is Urocanate hydratase from Salmonella typhi.